The chain runs to 327 residues: 3' cyclic ADP-D-ribose synthase AaTIR (327 aa).

The tract at residues 10–120 (VALSFAGENR…GILKTIGYIN (111 aa)) is TIR domain. Lys-229 is an active-site residue.

As to quaternary structure, homodimer.

The enzyme catalyses NADP(+) + H2O = ADP-D-ribose 2'-phosphate + nicotinamide + H(+). It carries out the reaction NAD(+) = 3'cADPR + nicotinamide + H(+). NAD(+) hydrolase (NADase) that generates 3'cADPR, a cyclization variant of cyclic ADP-D-ribose (also called v2-cADPR). Also cleaves NADP(+), but does not cyclize the product. The polypeptide is 3' cyclic ADP-D-ribose synthase AaTIR (Aquimarina amphilecti).